Consider the following 393-residue polypeptide: DNA primase large subunit PriL (393 aa).

The [4Fe-4S] cluster site is built by Cys-230, Cys-339, Cys-350, and Cys-356.

The protein belongs to the eukaryotic-type primase large subunit family. Heterodimer of a small subunit (PriS) and a large subunit (PriL). The cofactor is [4Fe-4S] cluster.

Its function is as follows. Regulatory subunit of DNA primase, an RNA polymerase that catalyzes the synthesis of short RNA molecules used as primers for DNA polymerase during DNA replication. Stabilizes and modulates the activity of the small subunit, increasing the rate of DNA synthesis, and conferring RNA synthesis capability. The DNA polymerase activity may enable DNA primase to also catalyze primer extension after primer synthesis. May also play a role in DNA repair. Displays gap-filling and strand-displacement activities. The chain is DNA primase large subunit PriL from Pyrococcus abyssi (strain GE5 / Orsay).